Reading from the N-terminus, the 201-residue chain is CMRF35-like molecule 7 (201 aa).

The signal sequence occupies residues 1-17; the sequence is MWLPPALLLLSLSGCFS. The 103-residue stretch at 18 to 120 folds into the Ig-like V-type domain; sequence IQGPESVRAP…PDLGTQVKVI (103 aa). The Extracellular portion of the chain corresponds to 18–151; it reads IQGPESVRAP…FIGSHKRNHY (134 aa). Cysteines 36 and 104 form a disulfide. A helical transmembrane segment spans residues 152–172; that stretch reads MLLVFVKVPILLILVTAILWL. Residues 173-201 lie on the Cytoplasmic side of the membrane; that stretch reads KGSQRVPEEPGEQPIYMNFSEPLTKDMAT. At tyrosine 188 the chain carries Phosphotyrosine; by FYN.

It belongs to the CD300 family. In terms of assembly, interacts with TYROBP, which enhances cell surface expression and activation properties. Interacts with GRB2 in the presence of FYN. Post-translationally, phosphorylation on Tyr-188 by FYN is required for interaction with GRB2. As to expression, expressed exclusively in myeloid lineages.

It is found in the cell membrane. In terms of biological role, acts as an activating immune receptor through its interaction with ITAM-bearing adapter TYROBP, and also independently by recruitment of GRB2. This Homo sapiens (Human) protein is CMRF35-like molecule 7 (CD300LB).